Here is a 185-residue protein sequence, read N- to C-terminus: Photosystem I assembly protein Ycf4 (185 aa).

The next 3 membrane-spanning stretches (helical) occupy residues 22-42, 57-77, and 101-121; these read FFFA…GFSS, ILFV…LFFS, and FYVF…LRVP.

It belongs to the Ycf4 family.

It localises to the plastid. The protein resides in the chloroplast thylakoid membrane. Seems to be required for the assembly of the photosystem I complex. In Gnetum parvifolium (Small-leaved jointfir), this protein is Photosystem I assembly protein Ycf4.